A 97-amino-acid chain; its full sequence is Osteocalcin (97 aa).

An N-terminal signal peptide occupies residues 1 to 18 (MKTLAILVLCSLAAICLT). Residues 19-52 (SSASAGAQPAGDSPVQGGLFMEKDQASAVVRQTR) constitute a propeptide that is removed on maturation. Residues 53–93 (AAKELTLAQTESLREVCETNMACDEMADAQGIVAAYQAFYG) enclose the Gla domain. Glu63, Glu67, Glu70, and Asp76 together coordinate Ca(2+). 4-carboxyglutamate occurs at positions 63, 67, and 70. Cys69 and Cys75 are joined by a disulfide. Glu77 is modified (4-carboxyglutamate).

This sequence belongs to the osteocalcin/matrix Gla protein family. In terms of processing, gamma-carboxyglutamate residues are formed by vitamin K dependent carboxylation by GGCX. These residues are essential for the binding of calcium. As to expression, in the branchial arches, BGP is found outside the chondrocyte-containing zone. It is found in some cells in the basal zone of the branchial filaments, near the branchial arches, and within the extracellular matrix in the medial zone. In the vertebra, BGP is found in the mineralized bone matrix.

The protein resides in the secreted. Its function is as follows. The carboxylated form is one of the main organic components of the bone matrix, which constitutes 1-2% of the total bone protein. The carboxylated form binds strongly to apatite and calcium. The chain is Osteocalcin (bglap) from Argyrosomus regius (Meagre).